Consider the following 372-residue polypeptide: Transaldolase 2 (372 aa).

Lys140 acts as the Schiff-base intermediate with substrate in catalysis.

The protein belongs to the transaldolase family. Type 2 subfamily.

Its subcellular location is the cytoplasm. The catalysed reaction is D-sedoheptulose 7-phosphate + D-glyceraldehyde 3-phosphate = D-erythrose 4-phosphate + beta-D-fructose 6-phosphate. Its pathway is carbohydrate degradation; pentose phosphate pathway; D-glyceraldehyde 3-phosphate and beta-D-fructose 6-phosphate from D-ribose 5-phosphate and D-xylulose 5-phosphate (non-oxidative stage): step 2/3. In terms of biological role, transaldolase is important for the balance of metabolites in the pentose-phosphate pathway. The sequence is that of Transaldolase 2 from Streptomyces avermitilis (strain ATCC 31267 / DSM 46492 / JCM 5070 / NBRC 14893 / NCIMB 12804 / NRRL 8165 / MA-4680).